The primary structure comprises 417 residues: Lipoyl synthase, mitochondrial (417 aa).

The transit peptide at 1 to 30 directs the protein to the mitochondrion; the sequence is MATSIPRSRCFLTSSTLKVVPRSRTPLRSF. The tract at residues 23-62 is disordered; it reads SRTPLRSFATTSDTPQTSVPEAPGKRSRPPTSFSDTLNAG. Polar residues-rich tracts occupy residues 30 to 41 and 51 to 61; these read FATTSDTPQTSV and PPTSFSDTLNA. The [4Fe-4S] cluster site is built by C132, C137, C143, C163, C167, C170, and S378. One can recognise a Radical SAM core domain in the interval 146–367; sequence GSSKSAATAT…RQRALDMGFL (222 aa).

This sequence belongs to the radical SAM superfamily. Lipoyl synthase family. It depends on [4Fe-4S] cluster as a cofactor.

The protein localises to the mitochondrion. The enzyme catalyses [[Fe-S] cluster scaffold protein carrying a second [4Fe-4S](2+) cluster] + N(6)-octanoyl-L-lysyl-[protein] + 2 oxidized [2Fe-2S]-[ferredoxin] + 2 S-adenosyl-L-methionine + 4 H(+) = [[Fe-S] cluster scaffold protein] + N(6)-[(R)-dihydrolipoyl]-L-lysyl-[protein] + 4 Fe(3+) + 2 hydrogen sulfide + 2 5'-deoxyadenosine + 2 L-methionine + 2 reduced [2Fe-2S]-[ferredoxin]. It functions in the pathway protein modification; protein lipoylation via endogenous pathway; protein N(6)-(lipoyl)lysine from octanoyl-[acyl-carrier-protein]: step 2/2. Its function is as follows. Catalyzes the radical-mediated insertion of two sulfur atoms into the C-6 and C-8 positions of the octanoyl moiety bound to the lipoyl domains of lipoate-dependent enzymes, thereby converting the octanoylated domains into lipoylated derivatives. The polypeptide is Lipoyl synthase, mitochondrial (Pyrenophora tritici-repentis (strain Pt-1C-BFP) (Wheat tan spot fungus)).